A 296-amino-acid polypeptide reads, in one-letter code: Probable endonuclease 4 (296 aa).

Positions 68, 109, 144, 178, 181, 213, 226, 228, and 258 each coordinate Zn(2+).

Belongs to the AP endonuclease 2 family. The cofactor is Zn(2+).

The catalysed reaction is Endonucleolytic cleavage to 5'-phosphooligonucleotide end-products.. Functionally, endonuclease IV plays a role in DNA repair. It cleaves phosphodiester bonds at apurinic or apyrimidinic (AP) sites, generating a 3'-hydroxyl group and a 5'-terminal sugar phosphate. This Staphylococcus carnosus (strain TM300) protein is Probable endonuclease 4.